An 81-amino-acid polypeptide reads, in one-letter code: Adipogenin (81 aa).

A helical transmembrane segment spans residues 16–36; it reads FLASWLCLPVGLLLFLLIVWL.

It belongs to the adipogenin family.

It is found in the membrane. Its subcellular location is the nucleus. Plays a role in stimulating adipocyte differentiation and development. This chain is Adipogenin, found in Sus scrofa (Pig).